A 102-amino-acid polypeptide reads, in one-letter code: Small ribosomal subunit protein uS10 (102 aa).

This sequence belongs to the universal ribosomal protein uS10 family. In terms of assembly, part of the 30S ribosomal subunit.

In terms of biological role, involved in the binding of tRNA to the ribosomes. The polypeptide is Small ribosomal subunit protein uS10 (Methylobacillus flagellatus (strain ATCC 51484 / DSM 6875 / VKM B-1610 / KT)).